The chain runs to 224 residues: Glycerol-3-phosphate acyltransferase (224 aa).

6 helical membrane-spanning segments follow: residues 14–34 (INMIFYIVAFLFGGIPFGWLL), 70–90 (YLSILTIILDATKGLIVVLGA), 99–119 (TQWSIALLAILGHCYSPYLGF), 129–149 (IGSVLLLIPVEGICGLIIWGI), 162–182 (LIGVLGTIGLTFVLPYILPLP), and 185–205 (ISIIKQINTHTPLVLIGLFIF).

It belongs to the PlsY family. Probably interacts with PlsX.

It localises to the cell inner membrane. It catalyses the reaction an acyl phosphate + sn-glycerol 3-phosphate = a 1-acyl-sn-glycero-3-phosphate + phosphate. Its pathway is lipid metabolism; phospholipid metabolism. Catalyzes the transfer of an acyl group from acyl-phosphate (acyl-PO(4)) to glycerol-3-phosphate (G3P) to form lysophosphatidic acid (LPA). This enzyme utilizes acyl-phosphate as fatty acyl donor, but not acyl-CoA or acyl-ACP. The sequence is that of Glycerol-3-phosphate acyltransferase from Helicobacter hepaticus (strain ATCC 51449 / 3B1).